The sequence spans 301 residues: 33 kDa chaperonin (301 aa).

Cystine bridges form between cysteine 244-cysteine 246 and cysteine 277-cysteine 280.

Belongs to the HSP33 family. Post-translationally, under oxidizing conditions two disulfide bonds are formed involving the reactive cysteines. Under reducing conditions zinc is bound to the reactive cysteines and the protein is inactive.

The protein localises to the cytoplasm. Functionally, redox regulated molecular chaperone. Protects both thermally unfolding and oxidatively damaged proteins from irreversible aggregation. Plays an important role in the bacterial defense system toward oxidative stress. The chain is 33 kDa chaperonin from Geobacter sulfurreducens (strain ATCC 51573 / DSM 12127 / PCA).